The sequence spans 1015 residues: Cytosolic carboxypeptidase 1 (1015 aa).

The segment at 384-462 (LPTATPSTPG…GALPKTTRLN (79 aa)) is disordered. A compositionally biased stretch (acidic residues) spans 416-451 (EDGMDEEDEAFVRDDDDEGKDDRGSDDDDGKDDDEI). The Peptidase M14 domain maps to 727 to 1013 (YPYTYSFLNS…DLLHSFLEMT (287 aa)). Zn(2+)-binding residues include His792, Glu795, and His891. The Proton donor/acceptor role is filled by Glu977.

It belongs to the peptidase M14 family. Zn(2+) is required as a cofactor. In hermaphrodites and males, expressed in amphid and IL2 ciliated sensory neurons. In males, expressed in CEM head neurons, RnB and HOB tail neurons, and in gubernacular erector and retractor muscles.

It is found in the perikaryon. Its subcellular location is the cell projection. The protein localises to the cilium. The protein resides in the dendrite. Functionally, catalyzes the deglutamylation of polyglutamate side chains generated by post-translational polyglutamylation of proteins such as tubulins. Via the deglutamylation of tubulin, regulates the localization and velocity of kinesin motors and the structural integrity of microtubules in sensory cilia. In male CEM sensory neurons, regulates the cilia release of bioactive extracellular vesicles. Also regulates microtubule dynamics in uterine muscle cells. The chain is Cytosolic carboxypeptidase 1 from Caenorhabditis elegans.